The primary structure comprises 227 residues: (S)-2-haloacid dehalogenase (227 aa).

The Nucleophile role is filled by aspartate 10. Residues 11–12 (LY), arginine 41, and 118–119 (SN) contribute to the an (S)-2-haloacid site. Positions 175-180 (SSNAWD) are important for catalytic activity.

Belongs to the HAD-like hydrolase superfamily. S-2-haloalkanoic acid dehalogenase family. In terms of assembly, homotetramer.

The catalysed reaction is an (S)-2-haloacid + H2O = a (2R)-2-hydroxycarboxylate + a halide anion + H(+). It catalyses the reaction (S)-2-chloropropanoate + H2O = (R)-lactate + chloride + H(+). Catalyzes the hydrolytic dehalogenation of small (S)-2-haloalkanoic acids to yield the corresponding (R)-2-hydroxyalkanoic acids. Acts on acids of short chain lengths, C(2) to C(4), with inversion of configuration at C-2. Active with 2-halogenated carboxylic acids and converts only the S-isomer (or L-isomer) of 2-chloropropionic acid with inversion of configuration to produce R-lactate (or D-isomer). The protein is (S)-2-haloacid dehalogenase of Pseudomonas putida (Arthrobacter siderocapsulatus).